A 911-amino-acid chain; its full sequence is Alpha-actinin-4 (911 aa).

The interval 1-269 is actin-binding; that stretch reads MVDYHAANQS…YVSSFYHAFS (269 aa). A disordered region spans residues 8–31; sequence NQSYQYGPSSGSNGAGGGGTMGDY. Residues 12–26 are interaction with VCL; that stretch reads QYGPSSGSNGAGGGG. Position 31 is a phosphotyrosine (Tyr-31). Positions 40–61 are interaction with VCL; that stretch reads RDLLLDPAWEKQQRKTFTAWCN. Calponin-homology (CH) domains lie at 50-154 and 163-269; these read KQQR…LRFA and TSAK…HAFS. The short motif at 84–88 is the LXXLL motif element; it reads LMLLL. The interaction with VCL stretch occupies residues 108 to 126; it reads KINNVNKALDFIASKGVKL. An N6-acetyllysine modification is found at Lys-114. The interval 177 to 192 is polyphosphoinositide (PIP2)-binding; it reads TAPYKNVNVQNFHISW. Residue Lys-214 is modified to N6-acetyllysine. Thr-249 carries the post-translational modification Phosphothreonine. Spectrin repeat units follow at residues 293–403, 413–518, 528–639, and 649–752; these read HLME…WLLN, HLAE…ALEK, QLHL…ALLE, and HLRR…EVEN. Residues Lys-592 and Lys-625 each carry the N6-acetyllysine modification. Ser-696 is subject to Phosphoserine. The mediates interaction with MICALL2 stretch occupies residues 736-911; sequence WEQLLTTIAR…STALYGESDL (176 aa). EF-hand domains are found at residues 765-800 and 806-841; these read EQMQEFRASFNHFDKDHGGALGPEEFKACLISLGYD and QGDAEFNRIMSVVDPNHSGLVTFQAFIDFMSRETTD. Asp-778 serves as a coordination point for Ca(2+). Residue Lys-779 is modified to N6-acetyllysine. Residues Asp-780 and Glu-789 each contribute to the Ca(2+) site. Position 859 is an N6-acetyllysine (Lys-859). Residue Ser-909 is modified to Phosphoserine.

The protein belongs to the alpha-actinin family. As to quaternary structure, homodimer; antiparallel. Identified in a IGF2BP1-dependent mRNP granule complex containing untranslated mRNAs. Component of the CART complex, at least composed of ACTN4, HGS/HRS, MYO5B and TRIM3. Binds TRIM3 at the N-terminus. Interacts with MAGI1. Interacts with PDLIM2. Identified in a complex with CASK, IQGAP1, MAGI2, NPHS1, SPTAN1 and SPTBN1. Interacts with MICALL2 (preferentially in opened conformation); stimulated by RAB13 activation. Interacts with PPARG and RARA. Binds to VCL; this interaction triggers VCL conformational changes. Interacts with SEPTIN14. Interacts with IGSF8.

Its subcellular location is the nucleus. The protein localises to the cytoplasm. The protein resides in the cell junction. It localises to the cytoskeleton. It is found in the stress fiber. Its subcellular location is the perinuclear region. Functionally, F-actin cross-linking protein which is thought to anchor actin to a variety of intracellular structures. This is a bundling protein. Probably involved in vesicular trafficking via its association with the CART complex. The CART complex is necessary for efficient transferrin receptor recycling but not for EGFR degradation. Involved in tight junction assembly in epithelial cells probably through interaction with MICALL2. Links MICALL2 to the actin cytoskeleton and recruits it to the tight junctions. May also function as a transcriptional coactivator, stimulating transcription mediated by the nuclear hormone receptors PPARG and RARA. Association with IGSF8 regulates the immune synapse formation and is required for efficient T-cell activation. This Bos taurus (Bovine) protein is Alpha-actinin-4.